A 449-amino-acid polypeptide reads, in one-letter code: Putative F-box/FBD/LRR-repeat protein At5g62970 (449 aa).

An F-box domain is found at 2-50 (DKISGFSDDELLVKILSFLPFKFAITTSVLSKQWKFLWMRVPKLEYDED). LRR repeat units follow at residues 27–52 (TTSV…EDSM), 81–107 (GHRM…RLKF), 158–185 (TLKL…HLER), 186–211 (VTYG…VVEL), 252–279 (YFKL…NITA), and 328–354 (IHNA…EFDE). One can recognise an FBD domain in the interval 368–418 (FWNQPNSVPQCLLSTLQTFEWSGYPGSVQGKDLATYILRKSRQLKIATISI).

The protein is Putative F-box/FBD/LRR-repeat protein At5g62970 of Arabidopsis thaliana (Mouse-ear cress).